Reading from the N-terminus, the 350-residue chain is Eukaryotic translation initiation factor 3 subunit I (350 aa).

WD repeat units lie at residues 8–49, 51–89, 91–135, 149–188, 198–240, and 296–335; these read GHER…GTLE, HQGVIWSIDVDPDTHLCATGGGDLAIKLWKVETGKCVFT, ESPS…ESLT, QDGAKATVAGWSANGEFIISGHDDGYIYKYDAQTGEAVNS, EKNV…KVYK, and GHFGPLNTVAVHPDGTGYSSGGEDGFIRVHTFDKSYFDFY.

This sequence belongs to the eIF-3 subunit I family. In terms of assembly, component of the eukaryotic translation initiation factor 3 (eIF-3) complex.

The protein resides in the cytoplasm. Its function is as follows. Component of the eukaryotic translation initiation factor 3 (eIF-3) complex, which is involved in protein synthesis of a specialized repertoire of mRNAs and, together with other initiation factors, stimulates binding of mRNA and methionyl-tRNAi to the 40S ribosome. The eIF-3 complex specifically targets and initiates translation of a subset of mRNAs involved in cell proliferation. The sequence is that of Eukaryotic translation initiation factor 3 subunit I from Scheffersomyces stipitis (strain ATCC 58785 / CBS 6054 / NBRC 10063 / NRRL Y-11545) (Yeast).